Consider the following 121-residue polypeptide: UPF0102 protein Mvan_2202 (121 aa).

This sequence belongs to the UPF0102 family.

This chain is UPF0102 protein Mvan_2202, found in Mycolicibacterium vanbaalenii (strain DSM 7251 / JCM 13017 / BCRC 16820 / KCTC 9966 / NRRL B-24157 / PYR-1) (Mycobacterium vanbaalenii).